Reading from the N-terminus, the 384-residue chain is Putative glycosyltransferase EpsF (384 aa).

This sequence belongs to the glycosyltransferase group 1 family. Glycosyltransferase 4 subfamily.

May be involved in the production of the exopolysaccharide (EPS) component of the extracellular matrix during biofilm formation. EPS is responsible for the adhesion of chains of cells into bundles. Required for biofilm maintenance. The sequence is that of Putative glycosyltransferase EpsF (epsF) from Bacillus subtilis (strain 168).